The following is a 577-amino-acid chain: ATP-dependent zinc metalloprotease FtsH (577 aa).

Over 1–3 (MKK) the chain is Cytoplasmic. The chain crosses the membrane as a helical span at residues 4–24 (LYWIILIAVVLACSGILMSLH). Residues 25-98 (LSVTKEEMTY…IKVDNSDSYS (74 aa)) lie on the Extracellular side of the membrane. The helical transmembrane segment at 99–119 (ATKVIQIILIITVGTGVFLFI) threads the bilayer. Residues 120-577 (RTSGGKDKPL…IDRICLKEAV (458 aa)) lie on the Cytoplasmic side of the membrane. 186-193 (GPPGTGKT) lines the ATP pocket. H409 lines the Zn(2+) pocket. E410 is an active-site residue. Zn(2+) is bound by residues H413 and D487.

In the central section; belongs to the AAA ATPase family. It in the C-terminal section; belongs to the peptidase M41 family. As to quaternary structure, homohexamer. The cofactor is Zn(2+).

The protein localises to the cell membrane. In terms of biological role, acts as a processive, ATP-dependent zinc metallopeptidase for both cytoplasmic and membrane proteins. Plays a role in the quality control of integral membrane proteins. The chain is ATP-dependent zinc metalloprotease FtsH from Lachnoclostridium phytofermentans (strain ATCC 700394 / DSM 18823 / ISDg) (Clostridium phytofermentans).